A 249-amino-acid polypeptide reads, in one-letter code: tRNA pseudouridine synthase A (249 aa).

Aspartate 53 functions as the Nucleophile in the catalytic mechanism. Tyrosine 111 is a binding site for substrate.

It belongs to the tRNA pseudouridine synthase TruA family. Homodimer.

It carries out the reaction uridine(38/39/40) in tRNA = pseudouridine(38/39/40) in tRNA. In terms of biological role, formation of pseudouridine at positions 38, 39 and 40 in the anticodon stem and loop of transfer RNAs. The polypeptide is tRNA pseudouridine synthase A (Streptococcus equi subsp. zooepidemicus (strain MGCS10565)).